The primary structure comprises 878 residues: Multiple C2 and transmembrane domain-containing protein 2 (878 aa).

2 disordered regions span residues Leu-20–Val-40 and Lys-143–Leu-178. The span at Asp-149–Asp-161 shows a compositional bias: basic and acidic residues. 3 C2 domains span residues Thr-177–Leu-292, Ser-334–Leu-452, and Pro-486–Leu-607. Positions 210, 216, 263, 265, and 270 each coordinate Ca(2+). Ca(2+) is bound by residues Asp-525, Asp-531, Asp-577, Asp-579, and Asp-585. A helical transmembrane segment spans residues Phe-694–Leu-714. Residues Lys-728 to Ser-752 are disordered. Residues Glu-737–Lys-746 show a composition bias toward acidic residues. The helical transmembrane segment at Pro-794–Ile-814 threads the bilayer.

This sequence belongs to the MCTP family. The cofactor is Ca(2+).

It is found in the membrane. Might play a role in the development of cardiac outflow tract. The polypeptide is Multiple C2 and transmembrane domain-containing protein 2 (Mctp2) (Mus musculus (Mouse)).